Consider the following 171-residue polypeptide: Protein GrpE (171 aa).

Residues 1–20 are disordered; that stretch reads MNEEKEESPSTEAEGAGAEV.

The protein belongs to the GrpE family. Homodimer.

Its subcellular location is the cytoplasm. Participates actively in the response to hyperosmotic and heat shock by preventing the aggregation of stress-denatured proteins, in association with DnaK and GrpE. It is the nucleotide exchange factor for DnaK and may function as a thermosensor. Unfolded proteins bind initially to DnaJ; upon interaction with the DnaJ-bound protein, DnaK hydrolyzes its bound ATP, resulting in the formation of a stable complex. GrpE releases ADP from DnaK; ATP binding to DnaK triggers the release of the substrate protein, thus completing the reaction cycle. Several rounds of ATP-dependent interactions between DnaJ, DnaK and GrpE are required for fully efficient folding. The polypeptide is Protein GrpE (Acidithiobacillus ferrooxidans (strain ATCC 23270 / DSM 14882 / CIP 104768 / NCIMB 8455) (Ferrobacillus ferrooxidans (strain ATCC 23270))).